Here is an 82-residue protein sequence, read N- to C-terminus: Delta-conotoxin-like SmVIA (82 aa).

An N-terminal signal peptide occupies residues 1 to 22; the sequence is MKLTCVMIVAVLFLIAWTFVTA. A propeptide spanning residues 23–49 is cleaved from the precursor; it reads DDSRNGLKNLFPKARHEMKNPEASKLN. Cystine bridges form between cysteine 54/cysteine 69, cysteine 61/cysteine 73, and cysteine 68/cysteine 77. Residue proline 65 is modified to 4-hydroxyproline.

The protein belongs to the conotoxin O1 superfamily. As to expression, expressed by the venom duct.

It is found in the secreted. Delta-conotoxins bind to site 6 of voltage-gated sodium channels (Nav) and inhibit the inactivation process. The protein is Delta-conotoxin-like SmVIA of Conus stercusmuscarum (Fly-specked cone).